The following is a 274-amino-acid chain: MELHEISKLDNKKHPERIVESKMKKRMKPYSLTSLNNLDDGCLMHILSFLSPIPDRYNTALVCHRWRYLACHPRLWLRVDRFVKDLSQPGVFLNIESAVSAARPGDTILIVAGGNYRVSNIQIKKPLCLVGGGEIPDETTLVCARGSDSALELLSTCKLANLTVKAELGCCLLHRSGRLTIDGCVLQCETNPLDHLSCPIVSTAGDEDIENILSHVEVKETVTGKIKANSVTVLQTRIEGGAKAVSTRGDLVLQRVRVMYSKAYLYFWFDVDYE.

In terms of domain architecture, F-box spans Leu32–Val79.

In terms of assembly, part of a SCF (SKP1-cullin-F-box) protein ligase complex. Interacts with SKP1A/ASK1.

It functions in the pathway protein modification; protein ubiquitination. This Arabidopsis thaliana (Mouse-ear cress) protein is F-box protein SKIP5 (SKIP5).